A 188-amino-acid polypeptide reads, in one-letter code: Segregation and condensation protein B (188 aa).

Belongs to the ScpB family. In terms of assembly, homodimer. Homodimerization may be required to stabilize the binding of ScpA to the Smc head domains. Component of a cohesin-like complex composed of ScpA, ScpB and the Smc homodimer, in which ScpA and ScpB bind to the head domain of Smc. The presence of the three proteins is required for the association of the complex with DNA.

Its subcellular location is the cytoplasm. Functionally, participates in chromosomal partition during cell division. May act via the formation of a condensin-like complex containing Smc and ScpA that pull DNA away from mid-cell into both cell halves. The sequence is that of Segregation and condensation protein B from Lactococcus lactis subsp. cremoris (strain MG1363).